A 209-amino-acid polypeptide reads, in one-letter code: MGKFQVIDHPLIQHKLTMIREKNCGTKVFREVVNEIAMLMAYEVSRDMPLEDVVIETPMGKSTQKTLSGKKVAIIPILRAGIGMVDGILELIPAAKVGHVGLYRDEETLQPHEYFVKLPEDIASRQLFVVDPMLATGGSAIMAIDSLKERGASNIKFVCLVAVPEGVKALQEAHPDVDIYTAALDERLNEDGYIVPGLGDAGDRLFGTK.

5-phospho-alpha-D-ribose 1-diphosphate is bound by residues Arg-79, Arg-104, and 131-139 (DPMLATGGS). Uracil is bound by residues Ile-194 and 199 to 201 (GDA). Asp-200 serves as a coordination point for 5-phospho-alpha-D-ribose 1-diphosphate.

It belongs to the UPRTase family. Requires Mg(2+) as cofactor.

The catalysed reaction is UMP + diphosphate = 5-phospho-alpha-D-ribose 1-diphosphate + uracil. Its pathway is pyrimidine metabolism; UMP biosynthesis via salvage pathway; UMP from uracil: step 1/1. With respect to regulation, allosterically activated by GTP. Functionally, catalyzes the conversion of uracil and 5-phospho-alpha-D-ribose 1-diphosphate (PRPP) to UMP and diphosphate. The protein is Uracil phosphoribosyltransferase of Enterococcus faecalis (strain ATCC 700802 / V583).